The sequence spans 666 residues: Long chain acyl-CoA synthetase 5 (666 aa).

ATP is bound at residue 228-239 (IMYTSGTTGDPK). The tract at residues 495–519 (DGWLHTGDVGEWQPNGSMKIIDRKK) is fatty acid-binding.

Belongs to the ATP-dependent AMP-binding enzyme family. Mg(2+) is required as a cofactor.

The enzyme catalyses a long-chain fatty acid + ATP + CoA = a long-chain fatty acyl-CoA + AMP + diphosphate. It participates in lipid metabolism; fatty acid metabolism. Activation of long-chain fatty acids for both synthesis of cellular lipids, and degradation via beta-oxidation. Preferentially uses palmitate, palmitoleate, oleate and linoleate. This is Long chain acyl-CoA synthetase 5 (LACS5) from Arabidopsis thaliana (Mouse-ear cress).